The chain runs to 385 residues: Isomaltose glucohydrolase (385 aa).

Trp125 is a substrate binding site. The active-site Proton acceptor is Asp175. The Proton donor role is filled by Glu178. Glu335 functions as the Proton acceptor in the catalytic mechanism.

This sequence belongs to the glycosyl hydrolase 15 family.

It is found in the cytoplasm. The catalysed reaction is isomaltose + H2O = beta-D-glucose + D-glucose. In terms of biological role, involved in the intracellular degradation of the cyclic tetrasaccharide cyclobis-(1-6)-alpha-nigerosyl (CNN) formed extracellularly from starch. Catalyzes the hydrolysis of alpha-1,6-glucosidic linkage from the non-reducing end of isomaltose to yield beta-D-glucose and D-glucose. Can also act on panose and isomaltotriose at a lower rate. It displays low or no activity toward CNN and the general GH15 enzyme substrates such as maltose, soluble starch or dextran. The protein is Isomaltose glucohydrolase of Kribbella flavida (strain DSM 17836 / JCM 10339 / NBRC 14399).